A 437-amino-acid chain; its full sequence is Methionine aminopeptidase 2 (437 aa).

Residues 1 to 90 (MAAQAAPAEE…LFPNNQYPKG (90 aa)) are disordered. Positions 10–20 (ELSKLSVDETK) are enriched in basic and acidic residues. The segment covering 31-42 (SDAESGDEEAEE) has biased composition (acidic residues). Residues 52–66 (AKKKKKRKPKKKKKA) show a composition bias toward basic residues. Histidine 190 contributes to the substrate binding site. A divalent metal cation is bound by residues aspartate 210, aspartate 221, and histidine 290. Histidine 298 lines the substrate pocket. Residues glutamate 323 and glutamate 418 each coordinate a divalent metal cation.

This sequence belongs to the peptidase M24A family. Methionine aminopeptidase eukaryotic type 2 subfamily. Requires Co(2+) as cofactor. Zn(2+) serves as cofactor. The cofactor is Mn(2+). Fe(2+) is required as a cofactor.

The protein resides in the cytoplasm. The catalysed reaction is Release of N-terminal amino acids, preferentially methionine, from peptides and arylamides.. Functionally, cotranslationally removes the N-terminal methionine from nascent proteins. The N-terminal methionine is often cleaved when the second residue in the primary sequence is small and uncharged (Met-Ala-, Cys, Gly, Pro, Ser, Thr, or Val). The polypeptide is Methionine aminopeptidase 2 (Neurospora crassa (strain ATCC 24698 / 74-OR23-1A / CBS 708.71 / DSM 1257 / FGSC 987)).